The chain runs to 54 residues: Ovomucoid (54 aa).

A Kazal-like domain is found at 4-54; the sequence is VDCSDYPKPACTVEYMPLCGSDNKTYGNKCNFCNAVVDSNGTLTLSHFGKC. Intrachain disulfides connect cysteine 6/cysteine 36, cysteine 14/cysteine 33, and cysteine 22/cysteine 54. Asparagine 43 is a glycosylation site (N-linked (GlcNAc...) asparagine).

The protein resides in the secreted. The protein is Ovomucoid of Anser canagicus (Emperor goose).